Here is a 908-residue protein sequence, read N- to C-terminus: UPF0182 protein Csac_0864 (908 aa).

A run of 7 helical transmembrane segments spans residues 22-42, 62-82, 98-118, 166-186, 208-228, 253-273, and 286-306; these read FVIS…DLFL, FYVK…VFFV, ISLL…ALIA, FLFY…IVLY, HIFF…KYEM, YFRL…YFFI, and SYIG…YFVV.

Belongs to the UPF0182 family.

Its subcellular location is the cell membrane. In Caldicellulosiruptor saccharolyticus (strain ATCC 43494 / DSM 8903 / Tp8T 6331), this protein is UPF0182 protein Csac_0864.